A 498-amino-acid polypeptide reads, in one-letter code: ATP synthase subunit beta, chloroplastic (498 aa).

Thr6 carries the post-translational modification Phosphothreonine. The residue at position 13 (Ser13) is a Phosphoserine. Residue 172-179 coordinates ATP; that stretch reads GGAGVGKT.

This sequence belongs to the ATPase alpha/beta chains family. F-type ATPases have 2 components, CF(1) - the catalytic core - and CF(0) - the membrane proton channel. CF(1) has five subunits: alpha(3), beta(3), gamma(1), delta(1), epsilon(1). CF(0) has four main subunits: a(1), b(1), b'(1) and c(9-12).

It localises to the plastid. The protein resides in the chloroplast thylakoid membrane. The enzyme catalyses ATP + H2O + 4 H(+)(in) = ADP + phosphate + 5 H(+)(out). Its function is as follows. Produces ATP from ADP in the presence of a proton gradient across the membrane. The catalytic sites are hosted primarily by the beta subunits. This is ATP synthase subunit beta, chloroplastic from Capsella bursa-pastoris (Shepherd's purse).